The chain runs to 435 residues: Casein kinase I homolog 2 (435 aa).

The Protein kinase domain maps to 12–282 (YRVGRKIGEG…FLQELFDDVL (271 aa)). ATP-binding positions include 18–26 (IGEGSFGVI) and Lys41. The active-site Proton acceptor is the Asp131. Ser361 bears the Phosphoserine mark.

It belongs to the protein kinase superfamily. CK1 Ser/Thr protein kinase family. Casein kinase I subfamily.

It is found in the cytoplasm. The catalysed reaction is L-seryl-[protein] + ATP = O-phospho-L-seryl-[protein] + ADP + H(+). It catalyses the reaction L-threonyl-[protein] + ATP = O-phospho-L-threonyl-[protein] + ADP + H(+). Functionally, casein kinases are operationally defined by their preferential utilization of acidic proteins such as caseins as substrates. May contribute to the regulation of morphology. The protein is Casein kinase I homolog 2 (cki2) of Schizosaccharomyces pombe (strain 972 / ATCC 24843) (Fission yeast).